A 393-amino-acid polypeptide reads, in one-letter code: Dual specificity mitogen-activated protein kinase kinase 1 (393 aa).

Residues 1–27 (MPKKKPTPIQLNPAPDGSAVNGTSSAE) are disordered. The Protein kinase domain occupies 68 to 361 (FEKISELGAG…LKQLMVHAFI (294 aa)). Residues 74-82 (LGAGNGGVV) and lysine 97 each bind ATP. Aspartate 190 (proton acceptor) is an active-site residue. 2 positions are modified to phosphoserine; by RAF: serine 218 and serine 222. The RAF1-binding stretch occupies residues 270-307 (ELELMFGCQVEGDAAETPPRPRTPGRPLSSYGMDSRPP). At threonine 286 the chain carries Phosphothreonine. Phosphothreonine; by MAPK1 is present on threonine 292. Serine 298 carries the phosphoserine; by PAK modification.

This sequence belongs to the protein kinase superfamily. STE Ser/Thr protein kinase family. MAP kinase kinase subfamily. Found in a complex with at least BRAF, HRAS, MAP2K1, MAPK3/ERK1 and RGS14. Forms a heterodimer with MAP2K2/MEK2. Forms heterodimers with KSR2 which further dimerize to form tetramers. Interacts with KSR1 or KSR2 and BRAF; the interaction with KSR1 or KSR2 mediates KSR1-BRAF or KSR2-BRAF dimerization. Interacts with ARBB2, LAMTOR3, MAPK1/ERK2 and RAF1. Interacts with MAPK1/ERK2. Interacts with MORG1. Interacts with PPARG. Interacts with isoform 1 of VRK2. Interacts with SGK1. Interacts with BIRC6/bruce. Interacts with KAT7; the interaction promotes KAT7 phosphorylation. Interacts with RAF1 and NEK10; the interaction is required for ERK1/2-signaling pathway activation in response to UV irradiation. Interacts with TRAF3IP3. Interacts with MOS. Post-translationally, phosphorylation at Ser-218 and Ser-222 by MAP kinase kinase kinases (BRAF or MEKK1) positively regulates the kinase activity. Also phosphorylated at Thr-292 by MAPK1/ERK2 and at Ser-298 by PAK. MAPK1/ERK2 phosphorylation of Thr-292 occurs in response to cellular adhesion and leads to inhibition of Ser-298 phosphorylation by PAK. Autophosphorylated at Ser-218 and Ser-222, autophosphosphorylation is promoted by NEK10 following UV irradiation.

Its subcellular location is the cytoplasm. It is found in the cytoskeleton. The protein localises to the microtubule organizing center. It localises to the centrosome. The protein resides in the spindle pole body. Its subcellular location is the nucleus. It is found in the membrane. It catalyses the reaction L-seryl-[protein] + ATP = O-phospho-L-seryl-[protein] + ADP + H(+). The enzyme catalyses L-threonyl-[protein] + ATP = O-phospho-L-threonyl-[protein] + ADP + H(+). It carries out the reaction L-tyrosyl-[protein] + ATP = O-phospho-L-tyrosyl-[protein] + ADP + H(+). With respect to regulation, ras proteins such as HRAS mediate the activation of RAF proteins such as RAF1 or BRAF which in turn activate extracellular signal-regulated kinases (ERK) through MAPK (mitogen-activated protein kinases) and ERK kinases MAP2K1/MEK1 and MAP2K2/MEK2. Activation occurs through phosphorylation of Ser-218 and Ser-222. MAP2K1/MEK1 binds KSR1 or KSR2 releasing the inhibitory intramolecular interaction between KSR1 or KSR2 protein kinase and N-terminal domains. This allows KSR1 or KSR2 dimerization with BRAF leading to BRAF activation and phosphorylation of MAP2K1. MAP2K1/MEK1 is also the target of negative feed-back regulation by its substrate kinases, such as MAPK1/ERK2. These phosphorylate MAP2K1/MEK1 on Thr-292, thereby facilitating dephosphorylation of the activating residues Ser-218 and Ser-222. Inhibited by serine/threonine phosphatase 2A. Functionally, dual specificity protein kinase which acts as an essential component of the MAP kinase signal transduction pathway. Binding of extracellular ligands such as growth factors, cytokines and hormones to their cell-surface receptors activates RAS and this initiates RAF1 activation. RAF1 then further activates the dual-specificity protein kinases MAP2K1/MEK1 and MAP2K2/MEK2. Both MAP2K1/MEK1 and MAP2K2/MEK2 function specifically in the MAPK/ERK cascade, and catalyze the concomitant phosphorylation of a threonine and a tyrosine residue in a Thr-Glu-Tyr sequence located in the extracellular signal-regulated kinases MAPK3/ERK1 and MAPK1/ERK2, leading to their activation and further transduction of the signal within the MAPK/ERK cascade. Activates BRAF in a KSR1 or KSR2-dependent manner; by binding to KSR1 or KSR2 releases the inhibitory intramolecular interaction between KSR1 or KSR2 protein kinase and N-terminal domains which promotes KSR1 or KSR2-BRAF dimerization and BRAF activation. Depending on the cellular context, this pathway mediates diverse biological functions such as cell growth, adhesion, survival and differentiation, predominantly through the regulation of transcription, metabolism and cytoskeletal rearrangements. One target of the MAPK/ERK cascade is peroxisome proliferator-activated receptor gamma (PPARG), a nuclear receptor that promotes differentiation and apoptosis. MAP2K1/MEK1 has been shown to export PPARG from the nucleus. The MAPK/ERK cascade is also involved in the regulation of endosomal dynamics, including lysosome processing and endosome cycling through the perinuclear recycling compartment (PNRC), as well as in the fragmentation of the Golgi apparatus during mitosis. The sequence is that of Dual specificity mitogen-activated protein kinase kinase 1 (MAP2K1) from Pan troglodytes (Chimpanzee).